The primary structure comprises 390 residues: Phosphoglycerate kinase (390 aa).

Residues aspartate 21 to asparagine 23, arginine 36, histidine 59 to arginine 62, arginine 112, and arginine 145 contribute to the substrate site. ATP is bound by residues lysine 196, glutamate 317, and glycine 343–threonine 346.

It belongs to the phosphoglycerate kinase family. As to quaternary structure, monomer.

Its subcellular location is the cytoplasm. It catalyses the reaction (2R)-3-phosphoglycerate + ATP = (2R)-3-phospho-glyceroyl phosphate + ADP. The protein operates within carbohydrate degradation; glycolysis; pyruvate from D-glyceraldehyde 3-phosphate: step 2/5. The polypeptide is Phosphoglycerate kinase (Cellvibrio japonicus (strain Ueda107) (Pseudomonas fluorescens subsp. cellulosa)).